The sequence spans 203 residues: Cutinase pbc1 (203 aa).

A signal peptide spans 1–18; that stretch reads MKVTALGNTLTGFGQALA. Cysteines 32 and 107 form a disulfide. Catalysis depends on serine 118, which acts as the Nucleophile. The cysteines at positions 166 and 173 are disulfide-linked. Residue histidine 170 is part of the active site. Histidine 183 acts as the Proton donor/acceptor in catalysis.

Belongs to the cutinase family. The 2 disulfide bonds play a critical role in holding the catalytic residues in juxta-position; reduction of the disulfide bridges results in the complete inactivation of the enzyme.

Its subcellular location is the secreted. The catalysed reaction is cutin + H2O = cutin monomers.. Catalyzes the hydrolysis of complex carboxylic polyesters found in the cell wall of plants. Degrades cutin, a macromolecule that forms the structure of the plant cuticle. Allows pathogenic fungi to penetrate through the cuticular barrier into the host plant during the initial stage of fungal infection. This Pyrenopeziza brassicae protein is Cutinase pbc1.